The primary structure comprises 356 residues: UDP-N-acetylglucosamine--N-acetylmuramyl-(pentapeptide) pyrophosphoryl-undecaprenol N-acetylglucosamine transferase (356 aa).

UDP-N-acetyl-alpha-D-glucosamine-binding positions include 15–17 (TGG), N127, R163, S191, I244, 263–268 (ALTVSE), and Q288.

This sequence belongs to the glycosyltransferase 28 family. MurG subfamily.

The protein resides in the cell inner membrane. It carries out the reaction di-trans,octa-cis-undecaprenyl diphospho-N-acetyl-alpha-D-muramoyl-L-alanyl-D-glutamyl-meso-2,6-diaminopimeloyl-D-alanyl-D-alanine + UDP-N-acetyl-alpha-D-glucosamine = di-trans,octa-cis-undecaprenyl diphospho-[N-acetyl-alpha-D-glucosaminyl-(1-&gt;4)]-N-acetyl-alpha-D-muramoyl-L-alanyl-D-glutamyl-meso-2,6-diaminopimeloyl-D-alanyl-D-alanine + UDP + H(+). The protein operates within cell wall biogenesis; peptidoglycan biosynthesis. Its function is as follows. Cell wall formation. Catalyzes the transfer of a GlcNAc subunit on undecaprenyl-pyrophosphoryl-MurNAc-pentapeptide (lipid intermediate I) to form undecaprenyl-pyrophosphoryl-MurNAc-(pentapeptide)GlcNAc (lipid intermediate II). This chain is UDP-N-acetylglucosamine--N-acetylmuramyl-(pentapeptide) pyrophosphoryl-undecaprenol N-acetylglucosamine transferase, found in Klebsiella pneumoniae (strain 342).